We begin with the raw amino-acid sequence, 458 residues long: Elongation factor 1-alpha (458 aa).

The residue at position 2 (Gly-2) is a N,N,N-trimethylglycine. Lys-3 carries the post-translational modification N6,N6-dimethyllysine; alternate. Lys-3 carries the N6-methyllysine; alternate modification. The 236-residue stretch at 5 to 240 (KTHVNVVVIG…DAIEPPVRPS (236 aa)) folds into the tr-type G domain. The tract at residues 14–21 (GHVDSGKS) is G1. A GTP-binding site is contributed by 14–21 (GHVDSGKS). An N6-methyllysine modification is found at Lys-30. The interval 70 to 74 (GITID) is G2. At Lys-79 the chain carries N6,N6,N6-trimethyllysine. The segment at 91-94 (DAPG) is G3. Residues 91–95 (DAPGH) and 153–156 (NKMD) contribute to the GTP site. Residues 153–156 (NKMD) are G4. Residues 192–194 (SGW) are G5. Lys-316 is subject to N6,N6-dimethyllysine; alternate. Lys-316 carries the N6-methyllysine; alternate modification. Lys-390 bears the N6-methyllysine mark.

This sequence belongs to the TRAFAC class translation factor GTPase superfamily. Classic translation factor GTPase family. EF-Tu/EF-1A subfamily.

The protein resides in the cytoplasm. Functionally, this protein promotes the GTP-dependent binding of aminoacyl-tRNA to the A-site of ribosomes during protein biosynthesis. This is Elongation factor 1-alpha (TEF-1) from Mucor circinelloides f. lusitanicus (Mucor racemosus var. lusitanicus).